The following is a 1020-amino-acid chain: Mastermind-like protein 1 (1020 aa).

The required for interaction with NOTCH proteins stretch occupies residues 1 to 97 (MVLPTCPMAE…PAPASAPAAA (97 aa)). Position 45 is a phosphoserine (Ser-45). Over residues 67 to 76 (KAKRAGKHRQ) the composition is skewed to basic residues. The segment at 67 to 191 (KAKRAGKHRQ…TAGKHSLGLD (125 aa)) is disordered. The span at 77 to 99 (PPAAATAPVAAPAPASAPAAARL) shows a compositional bias: low complexity. Positions 100 to 122 (DAADGPEHGRPVAHLHDTVKRSL) are enriched in basic and acidic residues. Residues 124–133 (SAASPQNGDQ) are compositionally biased toward polar residues. Residues Ser-127, Ser-310, Ser-321, and Ser-367 each carry the phosphoserine modification. 6 disordered regions span residues 335-522 (GASS…YGNT), 575-598 (PFRS…APAA), 663-686 (EKQQ…QSTF), 725-748 (SMGP…RGVA), 794-866 (QNAS…NPFT), and 888-959 (AMPS…RPGL). The segment covering 344-369 (DSPSLGSSQTLFHTTSQPGVDNSSPN) has biased composition (polar residues). Positions 373-383 (ASAQAQSAQRA) are enriched in low complexity. A compositionally biased stretch (polar residues) spans 399 to 410 (ELSSAHQLQQIA). Residues 419–435 (LQNPQQAAPAPGPGQLA) show a composition bias toward low complexity. Over residues 491–515 (PSHSNLLSHQSPSNLNQNPVNNQGS) the composition is skewed to polar residues. The segment covering 588 to 598 (PSSVPVAAPAA) has biased composition (low complexity). Positions 794–818 (QNASTSAAYGQNSLGSASLSQQHSK) are enriched in polar residues. Lys-827 bears the N6-acetyllysine mark. The segment covering 837–864 (MGSQNASWQHQGMPNLSSQTSGNSSVNP) has biased composition (polar residues). Residues 911-920 (SAQQRNSAPA) are compositionally biased toward low complexity. Ser-1019 is modified (phosphoserine).

Belongs to the mastermind family. Interacts (via N-terminus) with NOTCH1, NOTCH2, NOTCH3 and NOTCH4 (via ankyrin repeat region). Interacts (via N-terminus) with p53 (via DNA-binding region). Forms a DNA-binding complex with Notch proteins and RBPSUH/RBP-J kappa/CBF1. Also binds CREBBP/CBP and CDK8. Forms a complex with PRAG1, NOTCH1 and MAML1, in a MAML1-dependent manner. At E9.5, strongly expressed in the telencephalon, first branchial arch, forelimb buds and somites. By 10.5 dpc, continuously expressed in brain and spinal cord. Also expressed in first and second branchial arches and limb buds. By 11.5 dpc, expression in CNS is weak but increases in mesodermal tissues. At 14.5 dpc, detected in epithelial cells in trachea, esophagus and proximal and distal tubules of the developing lungs.

Its subcellular location is the nucleus speckle. Its function is as follows. Acts as a transcriptional coactivator for NOTCH proteins. Has been shown to amplify NOTCH-induced transcription of HES1. Enhances phosphorylation and proteolytic turnover of the NOTCH intracellular domain in the nucleus through interaction with CDK8. Binds to CREBBP/CBP which promotes nucleosome acetylation at NOTCH enhancers and activates transcription. Induces phosphorylation and localization of CREBBP to nuclear foci. Plays a role in hematopoietic development by regulating NOTCH-mediated lymphoid cell fate decisions. In Mus musculus (Mouse), this protein is Mastermind-like protein 1.